The primary structure comprises 860 residues: Leucine--tRNA ligase (860 aa).

The 'HIGH' region signature appears at 42-52 (PYPSGRLHMGH). Residues 619-623 (KMSKS) carry the 'KMSKS' region motif. Lysine 622 serves as a coordination point for ATP.

This sequence belongs to the class-I aminoacyl-tRNA synthetase family.

It localises to the cytoplasm. The catalysed reaction is tRNA(Leu) + L-leucine + ATP = L-leucyl-tRNA(Leu) + AMP + diphosphate. This Escherichia coli O157:H7 protein is Leucine--tRNA ligase.